An 89-amino-acid polypeptide reads, in one-letter code: Small ribosomal subunit protein uS14 (89 aa).

Belongs to the universal ribosomal protein uS14 family. In terms of assembly, part of the 30S ribosomal subunit. Contacts proteins S3 and S10.

Its function is as follows. Binds 16S rRNA, required for the assembly of 30S particles and may also be responsible for determining the conformation of the 16S rRNA at the A site. The sequence is that of Small ribosomal subunit protein uS14 from Porphyromonas gingivalis (strain ATCC 33277 / DSM 20709 / CIP 103683 / JCM 12257 / NCTC 11834 / 2561).